An 80-amino-acid chain; its full sequence is Large ribosomal subunit protein bL31B (80 aa).

It belongs to the bacterial ribosomal protein bL31 family. Type B subfamily. As to quaternary structure, part of the 50S ribosomal subunit.

The chain is Large ribosomal subunit protein bL31B from Oenococcus oeni (strain ATCC BAA-331 / PSU-1).